The chain runs to 190 residues: Potassium-transporting ATPase KdpC subunit (190 aa).

The chain crosses the membrane as a helical span at residues threonine 10–glycine 30.

Belongs to the KdpC family. As to quaternary structure, the system is composed of three essential subunits: KdpA, KdpB and KdpC.

The protein localises to the cell inner membrane. Part of the high-affinity ATP-driven potassium transport (or Kdp) system, which catalyzes the hydrolysis of ATP coupled with the electrogenic transport of potassium into the cytoplasm. This subunit acts as a catalytic chaperone that increases the ATP-binding affinity of the ATP-hydrolyzing subunit KdpB by the formation of a transient KdpB/KdpC/ATP ternary complex. The protein is Potassium-transporting ATPase KdpC subunit of Escherichia coli (strain SE11).